We begin with the raw amino-acid sequence, 84 residues long: RNA-binding protein SAHV_0542 (84 aa).

The protein belongs to the eukaryotic ribosomal protein eL8 family.

This chain is RNA-binding protein SAHV_0542, found in Staphylococcus aureus (strain Mu3 / ATCC 700698).